We begin with the raw amino-acid sequence, 373 residues long: UDP-N-acetylenolpyruvoylglucosamine reductase (373 aa).

In terms of domain architecture, FAD-binding PCMH-type spans 30–203; that stretch reads LACTANSVVT…SRVGFRLHTD (174 aa). Arg180 is an active-site residue. The active-site Proton donor is the Ser258. Glu356 is a catalytic residue.

This sequence belongs to the MurB family. FAD is required as a cofactor.

The protein resides in the cytoplasm. It catalyses the reaction UDP-N-acetyl-alpha-D-muramate + NADP(+) = UDP-N-acetyl-3-O-(1-carboxyvinyl)-alpha-D-glucosamine + NADPH + H(+). Its pathway is cell wall biogenesis; peptidoglycan biosynthesis. Cell wall formation. The chain is UDP-N-acetylenolpyruvoylglucosamine reductase from Psychrobacter arcticus (strain DSM 17307 / VKM B-2377 / 273-4).